The primary structure comprises 89 residues: Small ribosomal subunit protein bS20 (89 aa).

The interval 1 to 28 (MTLANIKSAKKRAIQSEKRRQHNASQRS) is disordered.

This sequence belongs to the bacterial ribosomal protein bS20 family.

Functionally, binds directly to 16S ribosomal RNA. The protein is Small ribosomal subunit protein bS20 of Pasteurella multocida (strain Pm70).